The chain runs to 1425 residues: B-cell CLL/lymphoma 9 protein (1425 aa).

The tract at residues Met1 to Thr172 is disordered. 2 stretches are compositionally biased toward polar residues: residues Lys7 to Lys21 and Met34 to Asn48. Residues Gly54–Pro63 show a composition bias toward low complexity. Residues Gly78–Lys94 show a composition bias toward gly residues. Basic and acidic residues-rich tracts occupy residues Glu100–Asp112 and Ser120–Glu135. At Ser104 the chain carries Phosphoserine. Over residues Thr144–Ser157 the composition is skewed to low complexity. Ser157 is modified (phosphoserine). The residue at position 172 (Thr172) is a Phosphothreonine. The tract at residues Val177–Ile205 is interaction with PYGO1. Residues Asn207–Thr226 are compositionally biased toward polar residues. 2 disordered regions span residues Asn207 to Ser441 and Val577 to Gln624. 2 stretches are compositionally biased toward pro residues: residues Lys232–Pro241 and Pro256–Ala270. The segment covering Gly304–Gly320 has biased composition (polar residues). At Thr315 the chain carries Phosphothreonine. Phosphoserine occurs at positions 318 and 352. A compositionally biased stretch (basic and acidic residues) spans Gln355 to Phe380. The tract at residues His358–Phe374 is interaction with CTNNB1. 2 positions are modified to phosphoserine: Ser686 and Ser688. Disordered stretches follow at residues Arg781–Asn1003, Val1031–Ser1051, Pro1153–Ala1199, and Pro1252–Met1275. Residue Arg800 is modified to Asymmetric dimethylarginine. The segment covering Asn822–Pro835 has biased composition (low complexity). An N6-acetyllysine modification is found at Lys843. Polar residues predominate over residues Thr866 to Gln890. Over residues Leu891 to Ala902 the composition is skewed to low complexity. A phosphoserine mark is found at Ser906 and Ser916. Residues Pro936–Pro946 show a composition bias toward pro residues. Residues Pro1157 to Pro1175 are compositionally biased toward gly residues.

Belongs to the BCL9 family. Binds to beta-catenin (CTNNB1), PYGO1 and PYGO2; the interaction with PYGO1 increases PYGO1 affinity to histone H3 methylated at 'Lys 4'.

The protein resides in the nucleus. Promotes beta-catenin's transcriptional activity. Involved in signal transduction through the Wnt pathway. The protein is B-cell CLL/lymphoma 9 protein (Bcl9) of Mus musculus (Mouse).